The following is a 216-amino-acid chain: Probable nicotinate-nucleotide adenylyltransferase (216 aa).

Belongs to the NadD family.

It catalyses the reaction nicotinate beta-D-ribonucleotide + ATP + H(+) = deamido-NAD(+) + diphosphate. It functions in the pathway cofactor biosynthesis; NAD(+) biosynthesis; deamido-NAD(+) from nicotinate D-ribonucleotide: step 1/1. Functionally, catalyzes the reversible adenylation of nicotinate mononucleotide (NaMN) to nicotinic acid adenine dinucleotide (NaAD). The protein is Probable nicotinate-nucleotide adenylyltransferase of Geobacillus kaustophilus (strain HTA426).